The chain runs to 351 residues: MRIEEDIKLGFKDVLIRPKRSILKSRSQVDLTRLFIFKHAQNKWSGIPLIAANMDTVGTFKMAIALSSFGILTAIHKYYSYLDWKKFIHTIPGTVVKHIMVSTGMLDEDFVKLKQILSLSSKLKYICIDVANGYSEKFVTFLKKVRECYCDKIICAGNVVTGEMVEELILSGADIVKVGIGPGSVCTTRAKTAIGYPQLSAVIECSDAAHGLGGQIISDGGCVVSGDIAKAFGGGADFVMLGGMLAGHKECEGLIFKENKKRYMIFYGMSSKFAMDRHIGGVARYKTPEGKTVKVLFRGAVSETINNILGGLRSTCTYVGAFTLKELTKRTTFIKVSEQENIIFNNQEVSN.

NADP(+) is bound at residue 108 to 131; the sequence is EDFVKLKQILSLSSKLKYICIDVA. The K(+) site is built by Gly-181 and Gly-183. Cys-186 (thioimidate intermediate) is an active-site residue. 216 to 239 is a binding site for NADP(+); the sequence is IISDGGCVVSGDIAKAFGGGADFV.

It belongs to the IMPDH/GMPR family. GuaC type 1 subfamily. Homotetramer.

The enzyme catalyses IMP + NH4(+) + NADP(+) = GMP + NADPH + 2 H(+). Its function is as follows. Catalyzes the irreversible NADPH-dependent deamination of GMP to IMP. It functions in the conversion of nucleobase, nucleoside and nucleotide derivatives of G to A nucleotides, and in maintaining the intracellular balance of A and G nucleotides. The polypeptide is GMP reductase (guaC) (Buchnera aphidicola subsp. Baizongia pistaciae (strain Bp)).